Consider the following 157-residue polypeptide: Phospholipase A2 phaiodactylipin (157 aa).

Positions 34 and 36 each coordinate Ca(2+). Cystine bridges form between Cys35–Cys56, Cys55–Cys94, Cys62–Cys87, Cys85–Cys127, and Cys132–Cys143. An N-linked (GlcNAc...) asparagine glycan is attached at Asn43. His59 is an active-site residue. Residue Asp60 coordinates Ca(2+). Asp88 is an active-site residue. A glycan (N-linked (GlcNAc...) asparagine) is linked at Asn101. Residues 134–139 (DEKSAR) constitute a propeptide, removed in mature form. A glycan (N-linked (GlcNAc...) asparagine) is linked at Asn153.

The protein belongs to the phospholipase A2 family. Group III subfamily. In terms of assembly, heterodimer composed of a small subunit and a large subunit; disulfide-linked. Ca(2+) is required as a cofactor. Expressed by the venom gland.

It localises to the secreted. It carries out the reaction a 1,2-diacyl-sn-glycero-3-phosphocholine + H2O = a 1-acyl-sn-glycero-3-phosphocholine + a fatty acid + H(+). Functionally, scorpion venom phospholipase A2 (PLA2) that is lethal to crickets and crustaceae. Causes inflammation in mice and lysis of human erythrocytes. Has a mild anticoagulant effect on human platelets. PLA2 catalyzes the calcium-dependent hydrolysis of the 2-acyl groups in 3-sn-phosphoglycerides. The sequence is that of Phospholipase A2 phaiodactylipin from Anuroctonus phaiodactylus (Mafia scorpion).